We begin with the raw amino-acid sequence, 235 residues long: MRSGLIAQKVGMTRLFTDEGTHVPVTVLKVEACQVVAVRTSETDGYTAVQLGAGVAKVKRTSKAMRGHFAAAKVEPKKKVVEFRVSEDCLLEPGAELSAAHFVAGQKVDIAGTTIGKGFAGAMKRHNFRGLEATHGVSVSHRSHGSTGQCQDPGRVFKGKKMAGHMGDTRITQQSLTVVATDADRGLILVKGSVPGADGAWLEVRDAVKKKLPEGVPLPAGLKAAVEAAVDGEKE.

N5-methylglutamine is present on glutamine 151.

This sequence belongs to the universal ribosomal protein uL3 family. In terms of assembly, part of the 50S ribosomal subunit. Forms a cluster with proteins L14 and L19. Post-translationally, methylated by PrmB.

Functionally, one of the primary rRNA binding proteins, it binds directly near the 3'-end of the 23S rRNA, where it nucleates assembly of the 50S subunit. In Rhodospirillum rubrum (strain ATCC 11170 / ATH 1.1.1 / DSM 467 / LMG 4362 / NCIMB 8255 / S1), this protein is Large ribosomal subunit protein uL3.